The sequence spans 460 residues: Cysteine--tRNA ligase (460 aa).

Position 29 (Cys-29) interacts with Zn(2+). The 'HIGH' region signature appears at Pro-31–Asn-41. Zn(2+)-binding residues include Cys-227, His-252, and Glu-256. Residues Lys-285–Ser-289 carry the 'KMSKS' region motif. ATP is bound at residue Lys-288.

The protein belongs to the class-I aminoacyl-tRNA synthetase family. As to quaternary structure, monomer. Requires Zn(2+) as cofactor.

Its subcellular location is the cytoplasm. The enzyme catalyses tRNA(Cys) + L-cysteine + ATP = L-cysteinyl-tRNA(Cys) + AMP + diphosphate. This Bradyrhizobium diazoefficiens (strain JCM 10833 / BCRC 13528 / IAM 13628 / NBRC 14792 / USDA 110) protein is Cysteine--tRNA ligase.